A 776-amino-acid polypeptide reads, in one-letter code: Disintegrin and metalloproteinase domain-containing protein 7 (776 aa).

Residues 1-23 (MLPGCIFLMILLILQVKEKVILG) form the signal peptide. Residues 24 to 176 (VEGQQLVYPK…NYSCTELNFT (153 aa)) constitute a propeptide that is removed on maturation. Over 26–669 (GQQLVYPKKL…WEETLNVTNV (644 aa)) the chain is Extracellular. 3 N-linked (GlcNAc...) asparagine glycosylation sites follow: N84, N167, and N174. Residues 199–394 (KYIELFIVAD…YKPTCMLNIP (196 aa)) enclose the Peptidase M12B domain. 4 cysteine pairs are disulfide-bonded: C310-C389, C350-C373, C352-C357, and C460-C480. The Disintegrin domain maps to 402-488 (FQFCGNKKLD…ACPKDQFRVN (87 aa)). 3 N-linked (GlcNAc...) asparagine glycosylation sites follow: N584, N629, and N665. Residues 670 to 690 (AILIVVLVLVIVGIGVLILLI) form a helical membrane-spanning segment. Residues 691–776 (RYQKCIKLKQ…GIADPNQSAK (86 aa)) lie on the Cytoplasmic side of the membrane. The tract at residues 757-776 (TLKPASKDSRGIADPNQSAK) is disordered.

Interacts with ITM2B in sperm; the interaction increases following capacitation. Interacts with HSPA5 and CANX.

It is found in the membrane. Its function is as follows. Required for normal male fertility via maintenance of epithelial cell morphology in the caput epididymis and subsequently correct epididymis lumen structure required for sperm development. Plays a role in sperm motility, flagella morphology and tyrosine phosphorylation during sperm capacitance. Plays a role in normal expression levels of HSPA5, ITM2B and ADAM2 in sperm both prior to and post-capacitation. This is a non catalytic metalloprotease-like protein. In Macaca fascicularis (Crab-eating macaque), this protein is Disintegrin and metalloproteinase domain-containing protein 7 (ADAM7).